Reading from the N-terminus, the 208-residue chain is MPRLYLGKIPYNARERDVERFLKGYGKINNISMKYGFAFVDFEDSRDAEDACHDLDGKTMEGSSMRLVVEMARGKPRGNDRHGSRSPRRRSRSPRRRSRTPPRRRSRSRDRKRSRRSRSRSSSRSRSPVRESRRRSESRSPSPKRDLKREASRSRSPLPAKDRSRTRSGSPPKNGGDRKRSVSRGRSHSRDGSNRSVSRSPSPGSPKD.

Positions 2–74 (PRLYLGKIPY…MRLVVEMARG (73 aa)) constitute an RRM domain. Residues 71–208 (MARGKPRGND…RSPSPGSPKD (138 aa)) form a disordered region. The span at 84–123 (SRSPRRRSRSPRRRSRTPPRRRSRSRDRKRSRRSRSRSSS) shows a compositional bias: basic residues. Residues 128–153 (PVRESRRRSESRSPSPKRDLKREASR) are compositionally biased toward basic and acidic residues.

The protein belongs to the splicing factor SR family. In terms of processing, extensively phosphorylated on serine residues in the RS domain.

The protein resides in the nucleus. Plays a functionally redundant role in shifting germ cell sexual differentiation in hermaphrodites. The sequence is that of Probable splicing factor, arginine/serine-rich 5 (rsp-5) from Caenorhabditis elegans.